The sequence spans 295 residues: GTPase Era (295 aa).

The Era-type G domain maps to 7–176; that stretch reads KTVSVCIIGR…ITSKAKIAPW (170 aa). Residues 15–22 are G1; the sequence is GRPNSGKS. GTP is bound at residue 15–22; it reads GRPNSGKS. The segment at 41–45 is G2; it reads QTTRS. The segment at 62-65 is G3; sequence DTPG. GTP contacts are provided by residues 62-66 and 124-127; these read DTPGI and NKIE. The segment at 124-127 is G4; the sequence is NKIE. The interval 152 to 154 is G5; it reads ISA. A KH type-2 domain is found at 204–281; the sequence is LQQELPYKLT…HLFLFVKVRE (78 aa).

It belongs to the TRAFAC class TrmE-Era-EngA-EngB-Septin-like GTPase superfamily. Era GTPase family. Monomer.

It localises to the cytoplasm. It is found in the cell inner membrane. Functionally, an essential GTPase that binds both GDP and GTP, with rapid nucleotide exchange. Plays a role in 16S rRNA processing and 30S ribosomal subunit biogenesis and possibly also in cell cycle regulation and energy metabolism. The sequence is that of GTPase Era from Rickettsia canadensis (strain McKiel).